Consider the following 172-residue polypeptide: Ribosome maturation factor RimM (172 aa).

Residues 96-169 (EGYFYHFQLQ…RMEIKLLPGL (74 aa)) form the PRC barrel domain.

Belongs to the RimM family. As to quaternary structure, binds ribosomal protein uS19.

Its subcellular location is the cytoplasm. Functionally, an accessory protein needed during the final step in the assembly of 30S ribosomal subunit, possibly for assembly of the head region. Essential for efficient processing of 16S rRNA. May be needed both before and after RbfA during the maturation of 16S rRNA. It has affinity for free ribosomal 30S subunits but not for 70S ribosomes. The protein is Ribosome maturation factor RimM of Syntrophomonas wolfei subsp. wolfei (strain DSM 2245B / Goettingen).